A 579-amino-acid polypeptide reads, in one-letter code: MSETLATDATAPAEKKDFIRQIVREDLASGKHTVIRTRFPPEPNGYLHIGHAKAICLDFGLAAEFGGLCNLRLDDTNPAKEDPEFVVAIQDDVRWLGYDWAQLRHASDYFQVYYLAAQKLIRDGHAFVCDLSAEQVRQYRGTLTEPGRNSPFRERSVEENLDLFARMRAGEFPDGARTLRAKIDMASGNINLRDPALYRIKHVEHQNTGNAWPIYPMYDFAHSLGDAVEGITHSLCTLEFEDHRPLYDWCVDKVDLVGHPELLQPLLDKGLPREAAKPRQIEFSRLNINYTVMSKRKLTALVEEQLVDGWDDPRMYTLQGLRRRGYTPAAMRLFVDRVGISKQNSLIDFSVLEGCLREDLDAAAPRRMAVIDPLKLVLTNLPEGHTETLQFSNHPKDDSFGTREVPFARELWIEREDFAEVPPKGWKRLVPGGEIRLRGAGIARVDEVIKNADGEIVELRGWLDPESRPGMEGANRKVKGTIHWVSAAHAVEAEIRLYDRLFSVEKPDDESEGKTYRDYLNPESKRNVRGYVEPSAAMAAPEQAFQFERTGYFVADRRDHSEATPVFNRSVTLRDTWAK.

The short motif at Pro41–His51 is the 'HIGH' region element. Residues Glu42–Asn44 and His48–Ala54 each bind ATP. The L-glutamine site is built by Asp74 and Tyr218. ATP is bound by residues Thr237, Arg285–Leu286, and Met293–Lys295. Positions Val292–Arg296 match the 'KMSKS' region motif.

The protein belongs to the class-I aminoacyl-tRNA synthetase family. As to quaternary structure, monomer.

The protein resides in the cytoplasm. It catalyses the reaction tRNA(Gln) + L-glutamine + ATP = L-glutaminyl-tRNA(Gln) + AMP + diphosphate. The protein is Glutamine--tRNA ligase of Xanthomonas axonopodis pv. citri (strain 306).